A 257-amino-acid polypeptide reads, in one-letter code: MLIIPAIDIKDGKCVRLTRGDFSQKKIYLDNPSDMAIIWRKQNAKMLHIVDLDAALTGEMVNIAAISDIVANVDIPVQVGGGIRSVDAVKSYLDIGVARVIIGSAAVTNPKLVEELMHIYRPSQIVVGIDAENGVPKIKGWLESATMQDYELALRMKEMGIERIIYTDITRDGMMQGIGYESTKRFAEKAGMKVTASGGVTNSSDLHKLEGLRRYGVDSVIVGKALYECNFPCQELWYSFEDEISIDHNFSTARQKS.

The active-site Proton acceptor is D8. D130 acts as the Proton donor in catalysis.

The protein belongs to the HisA/HisF family.

Its subcellular location is the cytoplasm. The catalysed reaction is 1-(5-phospho-beta-D-ribosyl)-5-[(5-phospho-beta-D-ribosylamino)methylideneamino]imidazole-4-carboxamide = 5-[(5-phospho-1-deoxy-D-ribulos-1-ylimino)methylamino]-1-(5-phospho-beta-D-ribosyl)imidazole-4-carboxamide. It participates in amino-acid biosynthesis; L-histidine biosynthesis; L-histidine from 5-phospho-alpha-D-ribose 1-diphosphate: step 4/9. The chain is 1-(5-phosphoribosyl)-5-[(5-phosphoribosylamino)methylideneamino] imidazole-4-carboxamide isomerase from Chlorobium chlorochromatii (strain CaD3).